The primary structure comprises 561 residues: Transmembrane protein 151B (561 aa).

Over residues 1–10 (MSPPGSAAGE) the composition is skewed to low complexity. Residues 1–42 (MSPPGSAAGESAGGGGGGGGSGVPEEPMASADEGPAREEQRP) form a disordered region. The segment covering 11-22 (SAGGGGGGGGSG) has biased composition (gly residues). A run of 2 helical transmembrane segments spans residues 59–79 (CLLL…CHVT) and 106–126 (YVYI…VECW). The span at 489–507 (VNEASCPTEQTRLSSQASM) shows a compositional bias: polar residues. Residues 489 to 523 (VNEASCPTEQTRLSSQASMRDNEEDEDEEEAGPPP) are disordered. Residues 510–519 (NEEDEDEEEA) are compositionally biased toward acidic residues.

The protein belongs to the TMEM151 family.

Its subcellular location is the membrane. The protein is Transmembrane protein 151B (Tmem151b) of Mus musculus (Mouse).